We begin with the raw amino-acid sequence, 355 residues long: Transcription factor TGAL9 (355 aa).

Disordered regions lie at residues 83–104 (FPSQPMHAGEPSPKGSSSMAAI) and 118–188 (GSSK…DAKT). Over residues 118–134 (GSSKRPPAAAAAGGQPS) the composition is skewed to low complexity. Residues 135–144 (RLNNPADQPS) are compositionally biased toward polar residues. Composition is skewed to basic and acidic residues over residues 148–159 (KDGKAAVVKKEG) and 176–188 (SEHEGPKTPDAKT). In terms of domain architecture, bZIP spans 185 to 230 (DAKTLRRLAQNREAARKSRLRKKAYIQNLETSRIRLSQLEQELVQR). The tract at residues 187–207 (KTLRRLAQNREAARKSRLRKK) is basic motif. Residues 213-227 (LETSRIRLSQLEQEL) form a leucine-zipper region. Residues 254–355 (AAWFDGEYAR…RPSELIKVST (102 aa)) enclose the DOG1 domain.

Belongs to the bZIP family. In terms of assembly, interacts with NPR5/NH4, NH5.1 and NH5.2.

The protein localises to the nucleus. Functionally, transcriptional regulator involved in defense response. The protein is Transcription factor TGAL9 of Oryza sativa subsp. japonica (Rice).